A 380-amino-acid polypeptide reads, in one-letter code: Chaperone protein DnaJ (380 aa).

Positions Asp-6 to Gly-71 constitute a J domain. The CR-type zinc finger occupies Gly-136 to Thr-215. Zn(2+) contacts are provided by Cys-149, Cys-152, Cys-167, Cys-170, Cys-189, Cys-192, Cys-203, and Cys-206. CXXCXGXG motif repeat units lie at residues Cys-149–Gly-156, Cys-167–Gly-174, Cys-189–Gly-196, and Cys-203–Gly-210.

It belongs to the DnaJ family. As to quaternary structure, homodimer. Zn(2+) serves as cofactor.

Its subcellular location is the cytoplasm. In terms of biological role, participates actively in the response to hyperosmotic and heat shock by preventing the aggregation of stress-denatured proteins and by disaggregating proteins, also in an autonomous, DnaK-independent fashion. Unfolded proteins bind initially to DnaJ; upon interaction with the DnaJ-bound protein, DnaK hydrolyzes its bound ATP, resulting in the formation of a stable complex. GrpE releases ADP from DnaK; ATP binding to DnaK triggers the release of the substrate protein, thus completing the reaction cycle. Several rounds of ATP-dependent interactions between DnaJ, DnaK and GrpE are required for fully efficient folding. Also involved, together with DnaK and GrpE, in the DNA replication of plasmids through activation of initiation proteins. This chain is Chaperone protein DnaJ, found in Gluconobacter oxydans (strain 621H) (Gluconobacter suboxydans).